Here is a 547-residue protein sequence, read N- to C-terminus: Probable acetolactate synthase (547 aa).

Glu57 serves as a coordination point for thiamine diphosphate. FAD-binding positions include Pro159 and 299-318 (DRVE…LYGD). Positions 388–468 (DFGSYAGRMI…VVSVIGNNGI (81 aa)) are thiamine pyrophosphate binding. Mg(2+) contacts are provided by Asp439 and Asn466.

The protein belongs to the TPP enzyme family. The cofactor is Mg(2+). It depends on thiamine diphosphate as a cofactor.

The catalysed reaction is 2 pyruvate + H(+) = (2S)-2-acetolactate + CO2. It participates in amino-acid biosynthesis; L-isoleucine biosynthesis; L-isoleucine from 2-oxobutanoate: step 1/4. It functions in the pathway amino-acid biosynthesis; L-valine biosynthesis; L-valine from pyruvate: step 1/4. The polypeptide is Probable acetolactate synthase (ilvG) (Mycobacterium bovis (strain ATCC BAA-935 / AF2122/97)).